The primary structure comprises 40 residues: Photosystem II reaction center protein J (40 aa).

A helical membrane pass occupies residues 8–28; it reads IPLWIIGTVTGIIVIGLIGIF.

The protein belongs to the PsbJ family. In terms of assembly, PSII is composed of 1 copy each of membrane proteins PsbA, PsbB, PsbC, PsbD, PsbE, PsbF, PsbH, PsbI, PsbJ, PsbK, PsbL, PsbM, PsbT, PsbX, PsbY, PsbZ, Psb30/Ycf12, at least 3 peripheral proteins of the oxygen-evolving complex and a large number of cofactors. It forms dimeric complexes.

The protein resides in the plastid. It localises to the chloroplast thylakoid membrane. Functionally, one of the components of the core complex of photosystem II (PSII). PSII is a light-driven water:plastoquinone oxidoreductase that uses light energy to abstract electrons from H(2)O, generating O(2) and a proton gradient subsequently used for ATP formation. It consists of a core antenna complex that captures photons, and an electron transfer chain that converts photonic excitation into a charge separation. The polypeptide is Photosystem II reaction center protein J (Morus indica (Mulberry)).